A 315-amino-acid chain; its full sequence is Ribosomal RNA small subunit methyltransferase H (315 aa).

S-adenosyl-L-methionine-binding positions include 33–35 (GGH), Asp-52, Phe-84, Asp-106, and Gln-113. The disordered stretch occupies residues 295–315 (SDELEENNRSHSAKLRVAEKL).

Belongs to the methyltransferase superfamily. RsmH family.

It is found in the cytoplasm. The enzyme catalyses cytidine(1402) in 16S rRNA + S-adenosyl-L-methionine = N(4)-methylcytidine(1402) in 16S rRNA + S-adenosyl-L-homocysteine + H(+). Its function is as follows. Specifically methylates the N4 position of cytidine in position 1402 (C1402) of 16S rRNA. The chain is Ribosomal RNA small subunit methyltransferase H from Lactobacillus gasseri (strain ATCC 33323 / DSM 20243 / BCRC 14619 / CIP 102991 / JCM 1131 / KCTC 3163 / NCIMB 11718 / NCTC 13722 / AM63).